The sequence spans 222 residues: GEM-like protein 4 (222 aa).

The 79-residue stretch at 95–173 (KIFKRLFRVS…CKIDRVNQSQ (79 aa)) folds into the GRAM domain.

The protein belongs to the GEM family.

This is GEM-like protein 4 from Arabidopsis thaliana (Mouse-ear cress).